The sequence spans 288 residues: Stomatin (288 aa).

Residues 1-22 form a disordered region; sequence MAEKRHTRDSEAQRLPDSFKDS. The Cytoplasmic segment spans residues 1–25; sequence MAEKRHTRDSEAQRLPDSFKDSPSK. The residue at position 10 (Ser-10) is a Phosphoserine; by PKA. A Phosphoserine modification is found at Ser-18. Residues 26–54 lie within the membrane without spanning it; the sequence is GLGPCGWILVAFSFLFTVITFPISIWMCI. Cys-30 carries the S-palmitoyl cysteine lipid modification. Residues 55-288 are Cytoplasmic-facing; that stretch reads KIIKEYERAI…IIGAKHSHLG (234 aa). Cys-87 carries S-palmitoyl cysteine; partial lipidation. A phosphoserine mark is found at Ser-161 and Ser-244. The required for homooligomerization stretch occupies residues 265–273; that stretch reads STIVFPLPI. The segment at 267 to 269 is required for lipid raft association; sequence IVF. The interval 273–287 is interaction with LANCL1; it reads IDMLQGIIGAKHSHL.

It belongs to the band 7/mec-2 family. In terms of assembly, homodimer and higher order homooligomer. The homodimer is banana-shaped. Interacts with ASIC1, ASIC2 and ASIC3. Interacts with LANCL1. Interacts with SLC2A1. Interacts with SLC4A1; this interaction positively regulates SLC4A1 activity. Identified in large complexes with SLC40A1, SLC14A1, SLC29A1 and AQP1. Interacts with STOML1; may redistribute STOM from the plasma membrane to late endosomes. Detected in erythrocytes (at protein level). Widely expressed.

It is found in the cell membrane. The protein resides in the cytoplasm. The protein localises to the cytoskeleton. It localises to the membrane raft. Its subcellular location is the melanosome. It is found in the cytoplasmic vesicle. Regulates ion channel activity and transmembrane ion transport. Regulates ASIC2 and ASIC3 channel activity. This chain is Stomatin, found in Homo sapiens (Human).